We begin with the raw amino-acid sequence, 262 residues long: Small ribosomal subunit protein mS23 (262 aa).

The segment covering 242-254 has biased composition (acidic residues); the sequence is AAEEQETSLDDDA. The disordered stretch occupies residues 242 to 262; it reads AAEEQETSLDDDATEKVAVAA.

The protein belongs to the mitochondrion-specific ribosomal protein mS23 family. As to quaternary structure, component of the mitochondrial small ribosomal subunit.

Its subcellular location is the mitochondrion. The sequence is that of Small ribosomal subunit protein mS23 (rsm25) from Aspergillus niger (strain ATCC MYA-4892 / CBS 513.88 / FGSC A1513).